We begin with the raw amino-acid sequence, 526 residues long: Hyaluronidase-5 (526 aa).

An N-terminal signal peptide occupies residues 1–35 (MRVLYFKHSFFRSLLKSNGLPQTLLVFLLIPCYLT). 5 disulfide bridges follow: cysteine 60–cysteine 351, cysteine 223–cysteine 237, cysteine 376–cysteine 387, cysteine 381–cysteine 435, and cysteine 437–cysteine 443. Glutamate 147 functions as the Proton donor in the catalytic mechanism. Asparagine 165 and asparagine 179 each carry an N-linked (GlcNAc...) asparagine glycan.

It belongs to the glycosyl hydrolase 56 family. Expressed in testis, epididymal sperm and epididymides (at protein level). Expressed at highest levels in testis with lesser amounts in epididymal sperm.

It is found in the cell membrane. It localises to the cytoplasmic vesicle. Its subcellular location is the secretory vesicle. The protein resides in the acrosome membrane. The protein localises to the secreted. It catalyses the reaction Random hydrolysis of (1-&gt;4)-linkages between N-acetyl-beta-D-glucosamine and D-glucuronate residues in hyaluronate.. In terms of biological role, catalyzes the hydrolysis of hyaluronan into smaller oligosaccharide fragments. Does not appear to be essential for fertilization. The protein is Hyaluronidase-5 of Mus musculus (Mouse).